The sequence spans 392 residues: Basic salivary proline-rich protein 1 (392 aa).

The N-terminal stretch at 1 to 16 is a signal peptide; it reads MLLILLSVALLALSSA. Glutamine 17 carries the post-translational modification Pyrrolidone carboxylic acid. The segment covering 19 to 28 has biased composition (polar residues); that stretch reads LNEDVSQEES. The disordered stretch occupies residues 19–392; the sequence is LNEDVSQEES…QGGRPSRPPQ (374 aa). Residues 34 to 47 show a composition bias toward low complexity; the sequence is GNPQGPSPQGGNKP. Serine 40 carries the post-translational modification Phosphoserine; alternate. A glycan (O-linked (Hex) serine; alternate) is linked at serine 40. A compositionally biased stretch (pro residues) spans 48–83; it reads QGPPPPPGKPQGPPPQGGNKPQGPPPPGKPQGPPPQ. 15 consecutive repeat copies span residues 53–72, 73–92, 93–112, 114–133, 134–153, 154–173, 175–194, 195–214, 215–234, 236–255, 256–275, 276–295, 297–316, 317–336, and 338–357. Residues 53–357 form a 15 X 20 AA approximate tandem repeats of P-P-G-K-P-Q-G-P-P-[PAQ]-Q-[GE]-[GD]-[NKS]-[KSQRN]-[PRQS]-[QS] [GPS]-[PQAR]-[PSR] region; that stretch reads PPGKPQGPPP…QEGNNPQGPP (305 aa). Serine 87 carries O-linked (HexNAc...) serine glycosylation. A compositionally biased stretch (pro residues) spans 91 to 144; sequence RSPPGKPQGPPPQGGNQPQGPPPPPGKPQGPPPQGGNKPQGPPPPGKPQGPPPQ. Serine 92 bears the Phosphoserine mark. Serine 150 carries the post-translational modification Phosphoserine; alternate. O-linked (Hex) serine; alternate glycosylation is present at serine 150. Pro residues-rich tracts occupy residues 152 to 205, 213 to 243, 252 to 266, and 274 to 324; these read RSPP…PPPQ, RSPP…PQGP, QGPP…PPPQ, and QSPP…PQGP. Over residues 325–334 the composition is skewed to low complexity; sequence PAQGGSKSQS. Serine 330 is a glycosylation site (O-linked (HexNAc...) serine). Residues 354-392 are compositionally biased toward pro residues; the sequence is QGPPPPAGGNPQQPQAPPAGQPQGPPRPPQGGRPSRPPQ.

O-glycosylated. O-glycosylation on Ser-87 is prevalent in head and neck cancer patients. O-Glycosylation on Ser-330 has a 5 times prevalence in head and neck cancers. In terms of processing, proteolytically cleaved at the tripeptide Xaa-Pro-Gln, where Xaa in the P(3) position is mostly lysine. The endoprotease may be of microbial origin. Post-translationally, pyroglutamate formation occurs on terminal Gln residues of cleaved peptides. Besides on the N-terminal of mature PBR1, pyroglutamate formation found on at least Gln-58.

The protein localises to the secreted. This Homo sapiens (Human) protein is Basic salivary proline-rich protein 1 (PRB1).